The chain runs to 470 residues: MIDKQVIVIGAGLAGCEAAWQIANSGIAVKLVEMRPLNSTPAHHTSEFAELVCSNSFGALSADRAAGLLQEELRTFNSLIIQTADKFSVPAGGALAVDRSKFSKSLTQTLSAHPFVEISRFEQLDLPNKKNITVLATGPLTSDELATKIKKFTGIDSCHFFDAASPIIYGDSINHEIVFKASRYDKGDPAYLNCPINKLDYFNFRNALINGEQASLKDFDKESANFFEACLPIEEIARRGIETMRYGPLKSIGLWNPNWGDLFDRENRLKKRPHAIVQLRKEDLEGKLLNMVGFQTNLKWSEQKRIFRMIPGLEKAEFVRFGVMHRNTFLESPKLLLPTLQFLKRETLFAAGQITGTEGYAAAAAGGLLAGINASLLAKNKNLVTFPNESMIGSLMNFISNRNEIMSNQKKNKFQPMPASFGLVPELTNKIKDKKLRYKAYQERSLKELQVFKKVLDASFKNDQLLVEIN.

Residue 10-15 participates in FAD binding; the sequence is GAGLAG.

It belongs to the MnmG family. TrmFO subfamily. It depends on FAD as a cofactor.

It is found in the cytoplasm. It carries out the reaction uridine(54) in tRNA + (6R)-5,10-methylene-5,6,7,8-tetrahydrofolate + NADH + H(+) = 5-methyluridine(54) in tRNA + (6S)-5,6,7,8-tetrahydrofolate + NAD(+). The enzyme catalyses uridine(54) in tRNA + (6R)-5,10-methylene-5,6,7,8-tetrahydrofolate + NADPH + H(+) = 5-methyluridine(54) in tRNA + (6S)-5,6,7,8-tetrahydrofolate + NADP(+). Functionally, catalyzes the folate-dependent formation of 5-methyl-uridine at position 54 (M-5-U54) in all tRNAs. The chain is Methylenetetrahydrofolate--tRNA-(uracil-5-)-methyltransferase TrmFO from Prochlorococcus marinus subsp. pastoris (strain CCMP1986 / NIES-2087 / MED4).